We begin with the raw amino-acid sequence, 267 residues long: Diphthine--ammonia ligase (267 aa).

Tyr97 bears the Phosphotyrosine mark.

It belongs to the Diphthine--ammonia ligase family.

It carries out the reaction diphthine-[translation elongation factor 2] + NH4(+) + ATP = diphthamide-[translation elongation factor 2] + AMP + diphosphate + H(+). It functions in the pathway protein modification; peptidyl-diphthamide biosynthesis. Amidase that may catalyze the last step of diphthamide biosynthesis using ammonium and ATP. Diphthamide biosynthesis consists in the conversion of an L-histidine residue in the translation elongation factor (EEF2) to diphthamide. This is Diphthine--ammonia ligase from Homo sapiens (Human).